A 261-amino-acid chain; its full sequence is MVFRAGIGRIGLIRGLATQAAEVSATRYKSFKIYRWNPDTPAEKPRMQEYKVDLNKCGPMVLDALIKIKNEQDPTLTFRRSCREGICGSCAMNIGGRNTLACLCKIDQAENKDVKIYPLPHMYVVKDLVPDLTNFYKQYKSIQPYLQKASKPADGREHLQSIADRKKLDGLYECILCACCSTACPSYWWNNEQYLGPAVLMQAYRWMVDSRDGAGAGRREQLQNAMSVYRCHTIMNCTRTCPKGLNPGKAIAEIKKALAFA.

The 2Fe-2S ferredoxin-type domain maps to 31–122 (FKIYRWNPDT…DVKIYPLPHM (92 aa)). Residues C82, C87, C90, and C102 each coordinate [2Fe-2S] cluster. Positions 164–194 (DRKKLDGLYECILCACCSTACPSYWWNNEQY) constitute a 4Fe-4S ferredoxin-type domain. Positions 174, 177, and 180 each coordinate [4Fe-4S] cluster. A [3Fe-4S] cluster-binding site is contributed by C184. Residue W189 coordinates a ubiquinone. C231 and C237 together coordinate [3Fe-4S] cluster. C241 is a binding site for [4Fe-4S] cluster.

It belongs to the succinate dehydrogenase/fumarate reductase iron-sulfur protein family. In terms of assembly, component of complex II composed of four subunits: a flavoprotein (FP), an iron-sulfur protein (IP), and a cytochrome b composed of a large and a small subunit. [2Fe-2S] cluster is required as a cofactor. Requires [3Fe-4S] cluster as cofactor. The cofactor is [4Fe-4S] cluster.

Its subcellular location is the mitochondrion inner membrane. The enzyme catalyses a quinone + succinate = fumarate + a quinol. It participates in carbohydrate metabolism; tricarboxylic acid cycle; fumarate from succinate (eukaryal route): step 1/1. Functionally, iron-sulfur protein (IP) subunit of succinate dehydrogenase (SDH) that is involved in complex II of the mitochondrial electron transport chain and is responsible for transferring electrons from succinate to ubiquinone (coenzyme Q). This chain is Succinate dehydrogenase [ubiquinone] iron-sulfur subunit, mitochondrial (SDH2), found in Eremothecium gossypii (strain ATCC 10895 / CBS 109.51 / FGSC 9923 / NRRL Y-1056) (Yeast).